Here is a 274-residue protein sequence, read N- to C-terminus: Small ribosomal subunit protein uS2 (274 aa).

A disordered region spans residues 255 to 274 (AEAESEDKGEVLYSFDDEEE).

This sequence belongs to the universal ribosomal protein uS2 family.

The sequence is that of Small ribosomal subunit protein uS2 from Gloeobacter violaceus (strain ATCC 29082 / PCC 7421).